The following is a 72-amino-acid chain: Translation initiation factor IF-1 (72 aa).

Positions 1–72 constitute an S1-like domain; sequence MSKEEVLEFS…TKGRITYRYK (72 aa).

The protein belongs to the IF-1 family. In terms of assembly, component of the 30S ribosomal translation pre-initiation complex which assembles on the 30S ribosome in the order IF-2 and IF-3, IF-1 and N-formylmethionyl-tRNA(fMet); mRNA recruitment can occur at any time during PIC assembly.

The protein localises to the cytoplasm. Functionally, one of the essential components for the initiation of protein synthesis. Stabilizes the binding of IF-2 and IF-3 on the 30S subunit to which N-formylmethionyl-tRNA(fMet) subsequently binds. Helps modulate mRNA selection, yielding the 30S pre-initiation complex (PIC). Upon addition of the 50S ribosomal subunit IF-1, IF-2 and IF-3 are released leaving the mature 70S translation initiation complex. The polypeptide is Translation initiation factor IF-1 (Bartonella quintana (strain Toulouse) (Rochalimaea quintana)).